A 691-amino-acid polypeptide reads, in one-letter code: Protein simr-1 (691 aa).

Positions 139–204 (EAEITPGTIY…TLFHLGKFTI (66 aa)) constitute a Tudor; degenerate domain. Disordered stretches follow at residues 547-573 (TGPCGSNTSRPTAQNTANSSINQDMSI) and 588-618 (DNLNDTENWPNSEREQSATEMESGAEATTNS). 2 stretches are compositionally biased toward polar residues: residues 549 to 573 (PCGSNTSRPTAQNTANSSINQDMSI) and 588 to 598 (DNLNDTENWPN).

The protein resides in the cytoplasm. It localises to the perinuclear region. Functionally, acts downstream of piRNA production to promote mediator complex-dependent endogenous siRNA biogenesis from piRNA-target mRNAs in the RNA interference pathway in germ cells. Not required to identify target mRNA by the piRNA pathway. Plays a role in both spermatogenesis and oogenesis and in maintaining fertility over multiple generations, probably by directing mutator-dependent silencing to piRNA-targeted genes. This chain is Protein simr-1, found in Caenorhabditis elegans.